Here is a 445-residue protein sequence, read N- to C-terminus: 3-phosphoshikimate 1-carboxyvinyltransferase (445 aa).

The disordered stretch occupies residues 1 to 25 (MTDSNQPMPLQARKSGALHGTARVP). 3-phosphoshikimate contacts are provided by Lys28, Ser29, and Arg33. Lys28 serves as a coordination point for phosphoenolpyruvate. 2 residues coordinate phosphoenolpyruvate: Gly101 and Arg129. Residues Ser175, Gln177, Asp328, and Lys355 each coordinate 3-phosphoshikimate. Gln177 contributes to the phosphoenolpyruvate binding site. Residue Asp328 is the Proton acceptor of the active site. Phosphoenolpyruvate-binding residues include Arg359 and Arg402.

This sequence belongs to the EPSP synthase family. In terms of assembly, monomer.

The protein resides in the cytoplasm. It catalyses the reaction 3-phosphoshikimate + phosphoenolpyruvate = 5-O-(1-carboxyvinyl)-3-phosphoshikimate + phosphate. It functions in the pathway metabolic intermediate biosynthesis; chorismate biosynthesis; chorismate from D-erythrose 4-phosphate and phosphoenolpyruvate: step 6/7. Functionally, catalyzes the transfer of the enolpyruvyl moiety of phosphoenolpyruvate (PEP) to the 5-hydroxyl of shikimate-3-phosphate (S3P) to produce enolpyruvyl shikimate-3-phosphate and inorganic phosphate. This Rhodopseudomonas palustris (strain ATCC BAA-98 / CGA009) protein is 3-phosphoshikimate 1-carboxyvinyltransferase.